We begin with the raw amino-acid sequence, 185 residues long: Elongation factor P (185 aa).

Belongs to the elongation factor P family.

Its subcellular location is the cytoplasm. It participates in protein biosynthesis; polypeptide chain elongation. In terms of biological role, involved in peptide bond synthesis. Stimulates efficient translation and peptide-bond synthesis on native or reconstituted 70S ribosomes in vitro. Probably functions indirectly by altering the affinity of the ribosome for aminoacyl-tRNA, thus increasing their reactivity as acceptors for peptidyl transferase. The protein is Elongation factor P of Synechococcus sp. (strain JA-3-3Ab) (Cyanobacteria bacterium Yellowstone A-Prime).